Here is a 201-residue protein sequence, read N- to C-terminus: MELVLKDAQSALEVSETTFGRDFNEALVHQVVVAYAANARQGTRAQKTRAEVTGSGKKPWRQKGTGRARAGTVKGPIWRGGGVSFAAKTQDHSQKVNKKMYRGALKSILSELVRQDRLVVVESFGVEAPKTKELKAKLKDMKLEDVLIVTPEIDENLFLAARNLYKVDVRDVAGIDPVSLIAFEKVLVTADAVKQIEEMLG.

Residues 45–71 (AQKTRAEVTGSGKKPWRQKGTGRARAG) are disordered.

The protein belongs to the universal ribosomal protein uL4 family. As to quaternary structure, part of the 50S ribosomal subunit.

One of the primary rRNA binding proteins, this protein initially binds near the 5'-end of the 23S rRNA. It is important during the early stages of 50S assembly. It makes multiple contacts with different domains of the 23S rRNA in the assembled 50S subunit and ribosome. Functionally, forms part of the polypeptide exit tunnel. This Shewanella loihica (strain ATCC BAA-1088 / PV-4) protein is Large ribosomal subunit protein uL4.